The following is a 457-amino-acid chain: NADP-specific glutamate dehydrogenase (457 aa).

Lys113 is a catalytic residue.

The protein belongs to the Glu/Leu/Phe/Val dehydrogenases family. As to quaternary structure, homohexamer.

The enzyme catalyses L-glutamate + NADP(+) + H2O = 2-oxoglutarate + NH4(+) + NADPH + H(+). The protein is NADP-specific glutamate dehydrogenase (GDH) of Tuber borchii (White truffle).